Consider the following 66-residue polypeptide: Large ribosomal subunit protein uL29 (66 aa).

It belongs to the universal ribosomal protein uL29 family.

The sequence is that of Large ribosomal subunit protein uL29 from Agrobacterium fabrum (strain C58 / ATCC 33970) (Agrobacterium tumefaciens (strain C58)).